A 312-amino-acid chain; its full sequence is MIDITLLGTGGGMPTPERNLSAAILNYKGRKILIDCGEGTQVSMKISKTGFKNIDIICITHWHGDHIVGLPGLLATMGNSGRKEPLTIIGPVGIGEIIKGLTVIVPYIPYELNVIEATKESLCFTINKENLLLSSKGEIIINTLEVEHSSPCIAYRFDVKRKPKFNLEKALDNKVPKVIWNLLQRGGNVEFEGNLYESSMVLGEERKGIKFSFVTDTLPIPELIPFVKKSDLLICESNYGQDSDVDKAIKNKHMTFSQAAQIAKSGEVKELILTHFSPAIEDPEEFIHFAKDIFPKAQIGKDRMIISIDFQN.

Zn(2+) is bound by residues His61, His63, Asp65, His66, His148, Asp216, and His275. The active-site Proton acceptor is the Asp65.

Belongs to the RNase Z family. Homodimer. It depends on Zn(2+) as a cofactor.

The enzyme catalyses Endonucleolytic cleavage of RNA, removing extra 3' nucleotides from tRNA precursor, generating 3' termini of tRNAs. A 3'-hydroxy group is left at the tRNA terminus and a 5'-phosphoryl group is left at the trailer molecule.. Functionally, zinc phosphodiesterase, which displays some tRNA 3'-processing endonuclease activity. Probably involved in tRNA maturation, by removing a 3'-trailer from precursor tRNA. The sequence is that of Ribonuclease Z from Clostridium tetani (strain Massachusetts / E88).